The sequence spans 188 residues: Achaete-scute homolog 5 (188 aa).

The basic motif stretch occupies residues Ala80 to Val93. One can recognise a bHLH domain in the interval Ala80–Leu132. Residues Lys94 to Leu132 form a helix-loop-helix motif region. Residues Thr139–Leu188 form a disordered region. Pro residues predominate over residues Gly142–Ala153. Residues Ser158 to Ala168 show a composition bias toward polar residues. The span at Glu169–Leu181 shows a compositional bias: low complexity.

Interacts with transcription factor TCF3/E12. In terms of tissue distribution, expressed in teeth (at protein level).

It localises to the nucleus. In terms of biological role, transcription factor. Probably binds E-box motifs 5'-CANNTG-3' in complex with transcription factor TCF3/E12. Negatively modulates transcription of target genes such as CDH1/E-cadherin, perhaps by recruiting the PRC2 repressive complex to regulatory elements. Regulates ameloblast development and tooth germ growth, perhaps acting by positively modulating migration of inner enamel epithelium (IEE) cells. Plays a role in enamel formation. This is Achaete-scute homolog 5 from Mus musculus (Mouse).